The primary structure comprises 128 residues: Small ribosomal subunit protein bS6 (128 aa).

Residues A105–E128 form a disordered region. Basic and acidic residues predominate over residues P117–E128.

The protein belongs to the bacterial ribosomal protein bS6 family.

Its function is as follows. Binds together with bS18 to 16S ribosomal RNA. The protein is Small ribosomal subunit protein bS6 of Geotalea daltonii (strain DSM 22248 / JCM 15807 / FRC-32) (Geobacter daltonii).